We begin with the raw amino-acid sequence, 177 residues long: Protein FATTY ACID EXPORT 4, chloroplastic (177 aa).

The N-terminal 63 residues, 1 to 63 (MWSLALTLPS…AELSELAPVV (63 aa)), are a transit peptide targeting the chloroplast. Transmembrane regions (helical) follow at residues 85–105 (KGSL…YFLT), 111–131 (RVLG…VFGF), and 140–160 (VPAG…VMAY).

It belongs to the TMEM14 family.

The protein localises to the plastid. The protein resides in the chloroplast membrane. Its function is as follows. May be involved in free fatty acids export from the plastids. The chain is Protein FATTY ACID EXPORT 4, chloroplastic from Arabidopsis thaliana (Mouse-ear cress).